The following is a 368-amino-acid chain: Quinolinate synthase (368 aa).

Residues histidine 46 and serine 63 each coordinate iminosuccinate. Residue cysteine 110 participates in [4Fe-4S] cluster binding. Iminosuccinate is bound by residues tyrosine 141–asparagine 143 and serine 162. Cysteine 230 provides a ligand contact to [4Fe-4S] cluster. Iminosuccinate is bound by residues histidine 256–glutamate 258 and threonine 273. Cysteine 320 lines the [4Fe-4S] cluster pocket.

The protein belongs to the quinolinate synthase family. Type 3 subfamily. The cofactor is [4Fe-4S] cluster.

The protein resides in the cytoplasm. The catalysed reaction is iminosuccinate + dihydroxyacetone phosphate = quinolinate + phosphate + 2 H2O + H(+). It participates in cofactor biosynthesis; NAD(+) biosynthesis; quinolinate from iminoaspartate: step 1/1. Functionally, catalyzes the condensation of iminoaspartate with dihydroxyacetone phosphate to form quinolinate. The protein is Quinolinate synthase of Bacillus cereus (strain G9842).